The primary structure comprises 427 residues: Glutamate-1-semialdehyde 2,1-aminomutase (427 aa).

N6-(pyridoxal phosphate)lysine is present on lysine 265.

It belongs to the class-III pyridoxal-phosphate-dependent aminotransferase family. HemL subfamily. As to quaternary structure, homodimer. Pyridoxal 5'-phosphate is required as a cofactor.

It localises to the cytoplasm. It carries out the reaction (S)-4-amino-5-oxopentanoate = 5-aminolevulinate. It functions in the pathway porphyrin-containing compound metabolism; protoporphyrin-IX biosynthesis; 5-aminolevulinate from L-glutamyl-tRNA(Glu): step 2/2. The protein is Glutamate-1-semialdehyde 2,1-aminomutase of Paraburkholderia phytofirmans (strain DSM 17436 / LMG 22146 / PsJN) (Burkholderia phytofirmans).